We begin with the raw amino-acid sequence, 511 residues long: Exodeoxyribonuclease 7 large subunit (511 aa).

It belongs to the XseA family. Heterooligomer composed of large and small subunits.

The protein resides in the cytoplasm. It catalyses the reaction Exonucleolytic cleavage in either 5'- to 3'- or 3'- to 5'-direction to yield nucleoside 5'-phosphates.. Functionally, bidirectionally degrades single-stranded DNA into large acid-insoluble oligonucleotides, which are then degraded further into small acid-soluble oligonucleotides. The protein is Exodeoxyribonuclease 7 large subunit of Brucella canis (strain ATCC 23365 / NCTC 10854 / RM-666).